Reading from the N-terminus, the 176-residue chain is Japanin-like-RS (176 aa).

The N-terminal stretch at 1 to 24 (MKVLLCLVCSFYIIVSSITTMTTG) is a signal peptide. Intrachain disulfides connect Cys52-Cys174 and Cys138-Cys162. The N-linked (GlcNAc...) asparagine glycan is linked to Asn155.

It belongs to the calycin superfamily. Lipocalin family. In terms of assembly, homodimer; non-disulfide-linked. Each monomer accommodates one molecule of cholesterol in a pocket. Expressed in salivary glands.

The protein localises to the secreted. Its function is as follows. Salivary tick protein that modulates host immune response. This protein blocks dendritic cell (DC) differentiation from monocytes. In addition, it inhibits up-regulation of costimulatory molecules and pro-inflammatory cytokines in response to stimuli and promotes up-regulation of co-inhibitory molecules and the anti-inflammatory cytokine interleukin-10. It has a pocket to accomodate cholesterol, which may have immune-modulatory roles, either directly or through interactions with the host gut microbiota. This Rhipicephalus sanguineus (Brown dog tick) protein is Japanin-like-RS.